The following is a 694-amino-acid chain: Threonine--tRNA ligase (694 aa).

Positions 8 to 74 constitute a TGS domain; it reads NFVNTSVTTH…EETATFTAVP (67 aa). Residues 273 to 579 are catalytic; the sequence is DHRRLGTELD…LLEHYAGAFP (307 aa). Residues cysteine 378, histidine 429, and histidine 556 each coordinate Zn(2+).

This sequence belongs to the class-II aminoacyl-tRNA synthetase family. Homodimer. It depends on Zn(2+) as a cofactor.

The protein localises to the cytoplasm. The catalysed reaction is tRNA(Thr) + L-threonine + ATP = L-threonyl-tRNA(Thr) + AMP + diphosphate + H(+). In terms of biological role, catalyzes the attachment of threonine to tRNA(Thr) in a two-step reaction: L-threonine is first activated by ATP to form Thr-AMP and then transferred to the acceptor end of tRNA(Thr). Also edits incorrectly charged L-seryl-tRNA(Thr). The protein is Threonine--tRNA ligase of Corynebacterium efficiens (strain DSM 44549 / YS-314 / AJ 12310 / JCM 11189 / NBRC 100395).